Reading from the N-terminus, the 950-residue chain is Translation initiation factor IF-2 (950 aa).

2 disordered regions span residues 69 to 92 (KTKT…AGKA) and 128 to 352 (KPKV…SNVP). Basic and acidic residues-rich tracts occupy residues 77–86 (AKSKQEDHPR), 128–158 (KPKV…EAKA), 165–186 (AEVK…EKKK), 200–234 (KRAE…DNRR), and 291–312 (NRRD…DGNR). Composition is skewed to polar residues over residues 322-336 (NRNQ…NWNQ) and 343-352 (YQNNQSSNVP). In terms of domain architecture, tr-type G spans 448–619 (ERPAVVTIMG…LLVAEVQELK (172 aa)). A G1 region spans residues 457-464 (GHVDHGKT). Residue 457–464 (GHVDHGKT) participates in GTP binding. Positions 482-486 (GITQH) are G2. The tract at residues 503-506 (DTPG) is G3. Residues 503–507 (DTPGH) and 557–560 (NKID) contribute to the GTP site. The tract at residues 557 to 560 (NKID) is G4. The tract at residues 595-597 (SAK) is G5.

This sequence belongs to the TRAFAC class translation factor GTPase superfamily. Classic translation factor GTPase family. IF-2 subfamily.

It is found in the cytoplasm. Functionally, one of the essential components for the initiation of protein synthesis. Protects formylmethionyl-tRNA from spontaneous hydrolysis and promotes its binding to the 30S ribosomal subunits. Also involved in the hydrolysis of GTP during the formation of the 70S ribosomal complex. The sequence is that of Translation initiation factor IF-2 from Lactococcus lactis subsp. cremoris (strain SK11).